A 242-amino-acid chain; its full sequence is Ras-like protein family member 11A (242 aa).

The interval 17 to 241 is small GTPase-like; it reads ESSSDYLLPK…SPKVKAPSAL (225 aa). Residues 34–41, 81–85, and 147–150 contribute to the GTP site; these read GAGRVGKS, DTPGG, and NKGD.

The protein belongs to the small GTPase superfamily. Ras family. Interacts with UBF/UBTF. As to expression, widely expressed. Down-regulated in prostate tumors compared to normal prostate tissue. High levels found in colon tumor and normal colon tissue followed by small intestine, liver, jejunum, ileum, bladder and aorta. Lowest levels observed in endothelial cells.

Its subcellular location is the nucleus. The protein resides in the nucleolus. The catalysed reaction is GTP + H2O = GDP + phosphate + H(+). Functionally, regulator of rDNA transcription. Acts in cooperation UBF/UBTF and positively regulates RNA polymerase I transcription. This chain is Ras-like protein family member 11A, found in Homo sapiens (Human).